The following is an 86-amino-acid chain: Large ribosomal subunit protein bL31 (86 aa).

4 residues coordinate Zn(2+): Cys-16, Cys-18, Cys-38, and Cys-41.

This sequence belongs to the bacterial ribosomal protein bL31 family. Type A subfamily. In terms of assembly, part of the 50S ribosomal subunit. Requires Zn(2+) as cofactor.

In terms of biological role, binds the 23S rRNA. The sequence is that of Large ribosomal subunit protein bL31 from Acidothermus cellulolyticus (strain ATCC 43068 / DSM 8971 / 11B).